Reading from the N-terminus, the 377-residue chain is Lactosylceramide 1,3-N-acetyl-beta-D-glucosaminyltransferase B (377 aa).

The Cytoplasmic portion of the chain corresponds to 1-13 (MLISARRLRRCQS). The chain crosses the membrane as a helical; Signal-anchor for type II membrane protein span at residues 14 to 30 (LQLLASCFVLSLMALLV). Over 31–377 (QEDNSLVNHV…DTYPCSAAWS (347 aa)) the chain is Lumenal. N-linked (GlcNAc...) asparagine glycosylation is found at Asn-56, Asn-167, and Asn-275.

This sequence belongs to the glycosyltransferase 31 family.

It localises to the golgi apparatus membrane. It catalyses the reaction a beta-D-Gal-(1-&gt;4)-beta-D-Glc-(1&lt;-&gt;1)-Cer(d18:1(4E)) + UDP-N-acetyl-alpha-D-glucosamine = a beta-D-GlcNAc-(1-&gt;3)-beta-D-Gal-(1-&gt;4)-beta-D-Glc-(1&lt;-&gt;1)-Cer(d18:1(4E)) + UDP + H(+). It carries out the reaction a neolactoside nLc4Cer(d18:1(4E)) + UDP-N-acetyl-alpha-D-glucosamine = a neolactoside IV(3)-beta-GlcNAc-nLc4Cer(d18:1(4E)) + UDP + H(+). Its pathway is protein modification; protein glycosylation. Beta-1,3-N-acetylglucosaminyltransferase that plays a key role in the synthesis of lacto- or neolacto-series carbohydrate chains on glycolipids. This is Lactosylceramide 1,3-N-acetyl-beta-D-glucosaminyltransferase B (b3gnt5-b) from Xenopus laevis (African clawed frog).